Consider the following 256-residue polypeptide: MADWSAEQYLKFEDERTRPARDLLAQIPRLEARQIADIGCGPGNSTELLARRWPQAKIIGIDTSADMLRQARERLPDATFIEANVAHWVPPAGTDILFANAIFQWVPDHLTQFKRLAEGLPEGGVLAVQMPDNLDQPSHALMRQVAQLPQFRKQLAHAAEARAALPHPSVYYDALRPLGRALDIWHTVYHHALDDAAAIVEWVKGTGLRPFLDPLDFPERKEFLEAYTARIAEAYPPRIDGKVLLRFPRFFIVLTR.

It belongs to the methyltransferase superfamily. Tam family.

The protein resides in the cytoplasm. The catalysed reaction is trans-aconitate + S-adenosyl-L-methionine = (E)-3-(methoxycarbonyl)pent-2-enedioate + S-adenosyl-L-homocysteine. Functionally, catalyzes the S-adenosylmethionine monomethyl esterification of trans-aconitate. The protein is Trans-aconitate 2-methyltransferase of Afipia carboxidovorans (strain ATCC 49405 / DSM 1227 / KCTC 32145 / OM5) (Oligotropha carboxidovorans).